The chain runs to 415 residues: uncharacterized protein (415 aa).

This is an uncharacterized protein from Rickettsia prowazekii (strain Madrid E).